We begin with the raw amino-acid sequence, 159 residues long: Endoribonuclease YbeY (159 aa).

Positions 114, 118, and 124 each coordinate Zn(2+).

It belongs to the endoribonuclease YbeY family. The cofactor is Zn(2+).

Its subcellular location is the cytoplasm. Single strand-specific metallo-endoribonuclease involved in late-stage 70S ribosome quality control and in maturation of the 3' terminus of the 16S rRNA. The sequence is that of Endoribonuclease YbeY from Pectobacterium atrosepticum (strain SCRI 1043 / ATCC BAA-672) (Erwinia carotovora subsp. atroseptica).